A 261-amino-acid polypeptide reads, in one-letter code: Secreted RxLR effector protein 154 (261 aa).

The first 18 residues, 1–18 (MRRCALLFRLFLISYSCS), serve as a signal peptide directing secretion. Positions 49-64 (RILQADDPEHIRTEER) match the RxLR-dEER motif.

The protein belongs to the RxLR effector family.

The protein resides in the secreted. It localises to the host cell membrane. Secreted effector that completely suppresses the host cell death induced by cell death-inducing proteins. This chain is Secreted RxLR effector protein 154, found in Plasmopara viticola (Downy mildew of grapevine).